Reading from the N-terminus, the 213-residue chain is Lactobacillus shifted protein (213 aa).

Residues Pro28–Asn38 show a composition bias toward polar residues. 2 disordered regions span residues Pro28 to Pro56 and Pro182 to Arg213.

The sequence is that of Lactobacillus shifted protein (lbsA) from Emericella nidulans (strain FGSC A4 / ATCC 38163 / CBS 112.46 / NRRL 194 / M139) (Aspergillus nidulans).